A 162-amino-acid polypeptide reads, in one-letter code: Protein FAM167B (162 aa).

Belongs to the FAM167 (SEC) family.

In Mus musculus (Mouse), this protein is Protein FAM167B (Fam167b).